Here is a 340-residue protein sequence, read N- to C-terminus: Ketol-acid reductoisomerase (NADP(+)) (340 aa).

The region spanning 1–182 (MRVYYDRDCD…GGGRSGIIET (182 aa)) is the KARI N-terminal Rossmann domain. NADP(+) contacts are provided by residues 24-27 (YGSQ), Arg-48, Ser-51, Ser-53, and 83-86 (DELQ). The active site involves His-108. NADP(+) is bound at residue Gly-134. The region spanning 183-329 (NFREECETDL…ETLRGMMPWI (147 aa)) is the KARI C-terminal knotted domain. Mg(2+) is bound by residues Asp-191, Glu-195, Glu-227, and Glu-231. Ser-252 is a binding site for substrate.

Belongs to the ketol-acid reductoisomerase family. Requires Mg(2+) as cofactor.

It carries out the reaction (2R)-2,3-dihydroxy-3-methylbutanoate + NADP(+) = (2S)-2-acetolactate + NADPH + H(+). The enzyme catalyses (2R,3R)-2,3-dihydroxy-3-methylpentanoate + NADP(+) = (S)-2-ethyl-2-hydroxy-3-oxobutanoate + NADPH + H(+). The protein operates within amino-acid biosynthesis; L-isoleucine biosynthesis; L-isoleucine from 2-oxobutanoate: step 2/4. It functions in the pathway amino-acid biosynthesis; L-valine biosynthesis; L-valine from pyruvate: step 2/4. In terms of biological role, involved in the biosynthesis of branched-chain amino acids (BCAA). Catalyzes an alkyl-migration followed by a ketol-acid reduction of (S)-2-acetolactate (S2AL) to yield (R)-2,3-dihydroxy-isovalerate. In the isomerase reaction, S2AL is rearranged via a Mg-dependent methyl migration to produce 3-hydroxy-3-methyl-2-ketobutyrate (HMKB). In the reductase reaction, this 2-ketoacid undergoes a metal-dependent reduction by NADPH to yield (R)-2,3-dihydroxy-isovalerate. This is Ketol-acid reductoisomerase (NADP(+)) from Roseobacter denitrificans (strain ATCC 33942 / OCh 114) (Erythrobacter sp. (strain OCh 114)).